The sequence spans 400 residues: Carbamoyl phosphate synthase small chain (400 aa).

The segment at 1–199 (MSNETNANST…PYVIEAEGEA (199 aa)) is CPSase. Ser-66, Gly-250, and Gly-252 together coordinate L-glutamine. Positions 200–395 (RHTVVAYDLG…VALMDEDSEN (196 aa)) constitute a Glutamine amidotransferase type-1 domain. Cys-278 acts as the Nucleophile in catalysis. Positions 279, 282, 320, 322, and 323 each coordinate L-glutamine. Residues His-368 and Glu-370 contribute to the active site.

This sequence belongs to the CarA family. In terms of assembly, composed of two chains; the small (or glutamine) chain promotes the hydrolysis of glutamine to ammonia, which is used by the large (or ammonia) chain to synthesize carbamoyl phosphate. Tetramer of heterodimers (alpha,beta)4.

It catalyses the reaction hydrogencarbonate + L-glutamine + 2 ATP + H2O = carbamoyl phosphate + L-glutamate + 2 ADP + phosphate + 2 H(+). The enzyme catalyses L-glutamine + H2O = L-glutamate + NH4(+). It functions in the pathway amino-acid biosynthesis; L-arginine biosynthesis; carbamoyl phosphate from bicarbonate: step 1/1. It participates in pyrimidine metabolism; UMP biosynthesis via de novo pathway; (S)-dihydroorotate from bicarbonate: step 1/3. Small subunit of the glutamine-dependent carbamoyl phosphate synthetase (CPSase). CPSase catalyzes the formation of carbamoyl phosphate from the ammonia moiety of glutamine, carbonate, and phosphate donated by ATP, constituting the first step of 2 biosynthetic pathways, one leading to arginine and/or urea and the other to pyrimidine nucleotides. The small subunit (glutamine amidotransferase) binds and cleaves glutamine to supply the large subunit with the substrate ammonia. The chain is Carbamoyl phosphate synthase small chain from Corynebacterium efficiens (strain DSM 44549 / YS-314 / AJ 12310 / JCM 11189 / NBRC 100395).